Reading from the N-terminus, the 407-residue chain is Peptidase T (407 aa).

His-81 provides a ligand contact to Zn(2+). Asp-83 is an active-site residue. Asp-142 serves as a coordination point for Zn(2+). The active-site Proton acceptor is the Glu-176. 3 residues coordinate Zn(2+): Glu-177, Asp-199, and His-381.

The protein belongs to the peptidase M20B family. Requires Zn(2+) as cofactor.

The protein localises to the cytoplasm. It catalyses the reaction Release of the N-terminal residue from a tripeptide.. Its function is as follows. Cleaves the N-terminal amino acid of tripeptides. The chain is Peptidase T from Streptococcus pneumoniae (strain ATCC 700669 / Spain 23F-1).